We begin with the raw amino-acid sequence, 205 residues long: Ribonuclease HII (205 aa).

The region spanning 16 to 205 (VSEVGIDEVG…KSFLKKSNLF (190 aa)) is the RNase H type-2 domain. A divalent metal cation is bound by residues aspartate 22, glutamate 23, and aspartate 118.

The protein belongs to the RNase HII family. Mn(2+) is required as a cofactor. The cofactor is Mg(2+).

It localises to the cytoplasm. It carries out the reaction Endonucleolytic cleavage to 5'-phosphomonoester.. In terms of biological role, endonuclease that specifically degrades the RNA of RNA-DNA hybrids. The protein is Ribonuclease HII of Prochlorococcus marinus (strain MIT 9215).